Consider the following 558-residue polypeptide: Formate--tetrahydrofolate ligase (558 aa).

Residue T66 to T73 coordinates ATP.

The protein belongs to the formate--tetrahydrofolate ligase family.

The catalysed reaction is (6S)-5,6,7,8-tetrahydrofolate + formate + ATP = (6R)-10-formyltetrahydrofolate + ADP + phosphate. Its pathway is one-carbon metabolism; tetrahydrofolate interconversion. In Clostridium kluyveri (strain NBRC 12016), this protein is Formate--tetrahydrofolate ligase.